A 269-amino-acid polypeptide reads, in one-letter code: Probable ribosomal RNA small subunit methyltransferase A (269 aa).

S-adenosyl-L-methionine contacts are provided by His-19, Leu-21, Gly-46, Glu-67, Asp-92, and Asn-107.

This sequence belongs to the class I-like SAM-binding methyltransferase superfamily. rRNA adenine N(6)-methyltransferase family. RsmA subfamily.

The protein resides in the cytoplasm. Specifically dimethylates two adjacent adenosines in the loop of a conserved hairpin near the 3'-end of 16S rRNA in the 30S particle. May play a critical role in biogenesis of 30S subunits. In Methanosarcina acetivorans (strain ATCC 35395 / DSM 2834 / JCM 12185 / C2A), this protein is Probable ribosomal RNA small subunit methyltransferase A.